Here is a 213-residue protein sequence, read N- to C-terminus: Ion-translocating oxidoreductase complex subunit A (213 aa).

The Periplasmic segment spans residues 1–24 (MLLLWQSRIMPGSEANIYITMTEY). The helical transmembrane segment at 25 to 45 (LLLLIGTVLVNNFVLVKFLGL) threads the bilayer. Topologically, residues 46 to 58 (CPFMGVSKKLETA) are cytoplasmic. The chain crosses the membrane as a helical span at residues 59–79 (IGMGLATTFVLTLASVCAYLV). The Periplasmic portion of the chain corresponds to 80–86 (ESYVLRP). Residues 87–107 (LGIEYLRTMSFILVIAVVVQF) traverse the membrane as a helical segment. The Cytoplasmic segment spans residues 108-121 (TEMVVHKTSPTLYR). A helical transmembrane segment spans residues 122–142 (LLGIFLPLITTNCAVLGVALL). Topologically, residues 143–153 (NINENHNFIQS) are periplasmic. Residues 154–174 (IIYGFGAAVGFSLVLILFASM) form a helical membrane-spanning segment. The Cytoplasmic segment spans residues 175 to 190 (RERIHVADVPAPFKGA). The chain crosses the membrane as a helical span at residues 191–211 (SIAMITAGLMSLAFMGFTGLV). Topologically, residues 212-213 (KL) are periplasmic.

This sequence belongs to the NqrDE/RnfAE family. In terms of assembly, the complex is composed of six subunits: RnfA, RnfB, RnfC, RnfD, RnfE and RnfG.

It is found in the cell inner membrane. Its function is as follows. Part of a membrane-bound complex that couples electron transfer with translocation of ions across the membrane. In Vibrio cholerae serotype O1 (strain ATCC 39541 / Classical Ogawa 395 / O395), this protein is Ion-translocating oxidoreductase complex subunit A.